The primary structure comprises 106 residues: UPF0235 protein OCAR_4310/OCA5_c02140 (106 aa).

Belongs to the UPF0235 family.

This Afipia carboxidovorans (strain ATCC 49405 / DSM 1227 / KCTC 32145 / OM5) (Oligotropha carboxidovorans) protein is UPF0235 protein OCAR_4310/OCA5_c02140.